We begin with the raw amino-acid sequence, 157 residues long: Small ribosomal subunit protein uS7 (157 aa).

The protein belongs to the universal ribosomal protein uS7 family. Part of the 30S ribosomal subunit. Contacts proteins S9 and S11.

One of the primary rRNA binding proteins, it binds directly to 16S rRNA where it nucleates assembly of the head domain of the 30S subunit. Is located at the subunit interface close to the decoding center, probably blocks exit of the E-site tRNA. The polypeptide is Small ribosomal subunit protein uS7 (Chlamydia muridarum (strain MoPn / Nigg)).